The following is a 134-amino-acid chain: Ribulose bisphosphate carboxylase small subunit (134 aa).

Belongs to the RuBisCO small chain family. As to quaternary structure, heterohexadecamer of 8 large and 8 small subunits.

RuBisCO catalyzes two reactions: the carboxylation of D-ribulose 1,5-bisphosphate, the primary event in carbon dioxide fixation, as well as the oxidative fragmentation of the pentose substrate. Both reactions occur simultaneously and in competition at the same active site. Although the small subunit is not catalytic it is essential for maximal activity. This Bradyrhizobium diazoefficiens (strain JCM 10833 / BCRC 13528 / IAM 13628 / NBRC 14792 / USDA 110) protein is Ribulose bisphosphate carboxylase small subunit.